Reading from the N-terminus, the 214-residue chain is Cytochrome c biogenesis ATP-binding export protein CcmA (214 aa).

The 203-residue stretch at 12–214 folds into the ABC transporter domain; it reads LAAHDLAFSR…TRMLTLEVAA (203 aa). 44-51 is a binding site for ATP; it reads GDNGAGKT.

The protein belongs to the ABC transporter superfamily. CcmA exporter (TC 3.A.1.107) family. As to quaternary structure, the complex is composed of two ATP-binding proteins (CcmA) and two transmembrane proteins (CcmB).

Its subcellular location is the cell inner membrane. It carries out the reaction heme b(in) + ATP + H2O = heme b(out) + ADP + phosphate + H(+). In terms of biological role, part of the ABC transporter complex CcmAB involved in the biogenesis of c-type cytochromes; once thought to export heme, this seems not to be the case, but its exact role is uncertain. Responsible for energy coupling to the transport system. This Xanthomonas axonopodis pv. citri (strain 306) protein is Cytochrome c biogenesis ATP-binding export protein CcmA.